The following is a 738-amino-acid chain: ATP-dependent RNA helicase rok1 (738 aa).

Disordered regions lie at residues 1–112 (MDAF…DEEV) and 145–176 (VASE…EQKK). Positions 17–29 (ATPSSAQSSTRLP) are enriched in polar residues. Positions 92-104 (SKEEKQEQERSGE) are enriched in basic and acidic residues. The Q motif motif lies at 190–218 (ELRSKYKISSRLAENIAEQGFTVPTEVQL). One can recognise a Helicase ATP-binding domain in the interval 231–447 (KAGESVEPDL…KSTIKERKEA (217 aa)). 244-251 (APTGSGKT) is a binding site for ATP. The tract at residues 316-356 (VVEREDEDDDGDDSSSEDGDESSESEHEERPIAKKSKGKAP) is disordered. The segment covering 319-338 (REDEDDDGDDSSSEDGDESS) has biased composition (acidic residues). A DEAD box motif is present at residues 394-397 (DEAD). Residues 487 to 655 (GLRQLLHPTA…SIQKWLLDAL (169 aa)) form the Helicase C-terminal domain. A disordered region spans residues 663–738 (KKELKKHGVK…GNESWDGLEN (76 aa)). Residues 697–706 (GFERRIENKK) show a composition bias toward basic and acidic residues.

It belongs to the DEAD box helicase family. DDX52/ROK1 subfamily. In terms of assembly, interacts with the U3 snoRNA and is associated with the 90S and 40S pre-ribosomes.

The protein localises to the nucleus. Its subcellular location is the nucleolus. It carries out the reaction ATP + H2O = ADP + phosphate + H(+). ATP-dependent RNA helicase involved in 40S ribosomal subunit biogenesis. Required for the processing and cleavage of 35S pre-rRNA at sites A0, A1, and A2, leading to mature 18S rRNA. In Aspergillus clavatus (strain ATCC 1007 / CBS 513.65 / DSM 816 / NCTC 3887 / NRRL 1 / QM 1276 / 107), this protein is ATP-dependent RNA helicase rok1 (rok1).